A 187-amino-acid polypeptide reads, in one-letter code: Potassium-transporting ATPase KdpC subunit (187 aa).

The chain crosses the membrane as a helical span at residues 11–31; the sequence is LILLMTVVTGALYPLAVTGIA.

It belongs to the KdpC family. As to quaternary structure, the system is composed of three essential subunits: KdpA, KdpB and KdpC.

It is found in the cell inner membrane. Part of the high-affinity ATP-driven potassium transport (or Kdp) system, which catalyzes the hydrolysis of ATP coupled with the electrogenic transport of potassium into the cytoplasm. This subunit acts as a catalytic chaperone that increases the ATP-binding affinity of the ATP-hydrolyzing subunit KdpB by the formation of a transient KdpB/KdpC/ATP ternary complex. The polypeptide is Potassium-transporting ATPase KdpC subunit (Pseudomonas entomophila (strain L48)).